Consider the following 377-residue polypeptide: Carbonic anhydrase 1 (377 aa).

A signal peptide spans M1–A20. The region spanning D38–H318 is the Alpha-carbonic anhydrase domain. Cystine bridges form between C61–C264, C194–C198, and C296–C351. N-linked (GlcNAc...) asparagine glycosylation is present at N101. H112 serves as the catalytic Proton acceptor. An N-linked (GlcNAc...) asparagine glycan is attached at N135. Zn(2+)-binding residues include H163, H165, and H182. Substrate-binding positions include T260 and T260 to T261. N-linked (GlcNAc...) asparagine glycosylation occurs at N297.

It belongs to the alpha-carbonic anhydrase family. In terms of assembly, tetramer of two large and two small subunits linked by two disulfide bonds. Requires Zn(2+) as cofactor.

Its subcellular location is the periplasm. It carries out the reaction hydrogencarbonate + H(+) = CO2 + H2O. Its function is as follows. Reversible hydration of carbon dioxide. This chain is Carbonic anhydrase 1 (CAH1), found in Chlamydomonas reinhardtii (Chlamydomonas smithii).